The sequence spans 150 residues: UPF0178 protein DMR_20710 (150 aa).

This sequence belongs to the UPF0178 family.

This Solidesulfovibrio magneticus (strain ATCC 700980 / DSM 13731 / RS-1) (Desulfovibrio magneticus) protein is UPF0178 protein DMR_20710.